The chain runs to 228 residues: MKKFLLSSSVLSANFSRLGEDIFDVLKSGSDMIHYDVMDNHYVKNLTFGPIVLESLRSVEKIKSMVIDVHLMTCPVDDLIIKFAKLDVNIISFHPESTNNVEKTIKLIKSYGCKVGLALNPLTPLCVLDNVLDKIDLILLMSVNPGFPGQKFIPSILNKIRIVRELIDKSKKNILLEVDGGINLSNIFKIASFGTDIFVIGSAIFNSINYDLTIRSFRDVLKNINCKK.

Serine 9 contributes to the substrate binding site. A divalent metal cation is bound by residues histidine 34, aspartate 36, and histidine 70. Aspartate 36 serves as the catalytic Proton acceptor. Substrate is bound by residues histidine 70, 146-149 (GFPG), 179-181 (DGG), and 201-202 (GS). Aspartate 179 is an a divalent metal cation binding site. Aspartate 179 serves as the catalytic Proton donor.

The protein belongs to the ribulose-phosphate 3-epimerase family. Requires a divalent metal cation as cofactor.

It carries out the reaction D-ribulose 5-phosphate = D-xylulose 5-phosphate. The protein operates within carbohydrate degradation. Its function is as follows. Catalyzes the reversible epimerization of D-ribulose 5-phosphate to D-xylulose 5-phosphate. In Buchnera aphidicola subsp. Baizongia pistaciae (strain Bp), this protein is Ribulose-phosphate 3-epimerase.